The following is a 132-amino-acid chain: Small ribosomal subunit protein uS8c (132 aa).

It belongs to the universal ribosomal protein uS8 family. In terms of assembly, part of the 30S ribosomal subunit.

The protein localises to the plastid. Its subcellular location is the chloroplast. One of the primary rRNA binding proteins, it binds directly to 16S rRNA central domain where it helps coordinate assembly of the platform of the 30S subunit. The sequence is that of Small ribosomal subunit protein uS8c (rps8) from Staurastrum punctulatum (Green alga).